Reading from the N-terminus, the 528-residue chain is Tyrosine--tRNA ligase, cytoplasmic (528 aa).

Residue methionine 1 is modified to N-acetylmethionine. Glycine 2 is modified (N-acetylglycine; in Tyrosine--tRNA ligase, cytoplasmic, N-terminally processed). Tyrosine 39 is a binding site for L-tyrosine. Tyrosine 39 is a binding site for trans-resveratrol. The short motif at 44-52 (TTGKPHVAY) is the 'HIGH' region element. Residues tyrosine 166, glutamine 170, aspartate 173, and glutamine 188 each contribute to the L-tyrosine site. Trans-resveratrol contacts are provided by glutamine 170 and aspartate 173. Lysine 197 carries the N6-acetyllysine modification. Phosphoserine is present on serine 205. Position 206 is an N6-acetyllysine (lysine 206). Residues 222-226 (KMSSS) carry the 'KMSKS' region motif. The short motif at 242-247 (KKKLKK) is the Nuclear localization signal element. The disordered stretch occupies residues 339–363 (AAYPDPSKQKPTAKGPAKSSEPEEI). Residues 364-468 (IPSRLDIRVG…AGSAPGERVF (105 aa)) form the tRNA-binding domain. Residue serine 386 is modified to Phosphoserine. 3 positions are modified to N6-acetyllysine: lysine 474, lysine 482, and lysine 490.

The protein belongs to the class-I aminoacyl-tRNA synthetase family. As to quaternary structure, homodimer. Interacts (when binding to resveratrol) with PARP1; interaction stimulates the poly-ADP-ribosyltransferase activity of PARP1.

It is found in the cytoplasm. The protein resides in the nucleus. The catalysed reaction is tRNA(Tyr) + L-tyrosine + ATP = L-tyrosyl-tRNA(Tyr) + AMP + diphosphate + H(+). Its activity is regulated as follows. Resveratrol strongly inhibits the tyrosine--tRNA ligase activity. Functionally, tyrosine--tRNA ligase that catalyzes the attachment of tyrosine to tRNA(Tyr) in a two-step reaction: tyrosine is first activated by ATP to form Tyr-AMP and then transferred to the acceptor end of tRNA(Tyr). Also acts as a positive regulator of poly-ADP-ribosylation in the nucleus, independently of its tyrosine--tRNA ligase activity. Activity is switched upon resveratrol-binding: resveratrol strongly inhibits the tyrosine--tRNA ligase activity and promotes relocalization to the nucleus, where YARS1 specifically stimulates the poly-ADP-ribosyltransferase activity of PARP1. This chain is Tyrosine--tRNA ligase, cytoplasmic (Yars1), found in Rattus norvegicus (Rat).